Consider the following 256-residue polypeptide: MVKSHIGSWILVLFVAMWSDVGLCKKRPKPGGGWNTGGSRYPGQGSPGGNRYPPQGGGGWGQPHGGGWGQPHGGGWGQPHGGGWGQPHGGGGWGQGGSHSQWNKPSKPKTNMKHVAGAAAAGAVVGGLGGYMLGSAMSRPLIHFGNDYEDRYYRENMYRYPNQVYYRPVDQYSNQNNFVHDCVNITVKQHTVTTTTKGENFTETDIKIMERVVEQMCITQYQRESQAYYQRGASVILFSSPPVILLISFLIFLIVG.

Residues 1-24 (MVKSHIGSWILVLFVAMWSDVGLC) form the signal peptide. The tract at residues 25-233 (KKRPKPGGGW…ESQAYYQRGA (209 aa)) is interaction with GRB2, ERI3 and SYN1. A disordered region spans residues 28–110 (PKPGGGWNTG…QWNKPSKPKT (83 aa)). A run of 5 repeats spans residues 54–62 (PQGGGGWGQ), 63–70 (PHGGGWGQ), 71–78 (PHGGGWGQ), 79–86 (PHGGGWGQ), and 87–95 (PHGGGGWGQ). The tract at residues 54–95 (PQGGGGWGQPHGGGWGQPHGGGWGQPHGGGWGQPHGGGGWGQ) is 5 X 8 AA tandem repeats of P-H-G-G-G-W-G-Q. Residues 55 to 97 (QGGGGWGQPHGGGWGQPHGGGWGQPHGGGWGQPHGGGGWGQGG) show a composition bias toward gly residues. The Cu(2+) site is built by H64, G65, G66, H72, G73, G74, H80, G81, G82, H88, G90, and G91. C182 and C217 are disulfide-bonded. N184 and N200 each carry an N-linked (GlcNAc...) asparagine glycan. A233 carries the GPI-anchor amidated alanine lipid modification. Residues 234–256 (SVILFSSPPVILLISFLIFLIVG) constitute a propeptide, removed in mature form.

It belongs to the prion family. Monomer and homodimer. Has a tendency to aggregate into amyloid fibrils containing a cross-beta spine, formed by a steric zipper of superposed beta-strands. Soluble oligomers may represent an intermediate stage on the path to fibril formation. Copper binding may promote oligomerization. Interacts with GRB2, APP, ERI3/PRNPIP and SYN1. Mislocalized cytosolically exposed PrP interacts with MGRN1; this interaction alters MGRN1 subcellular location and causes lysosomal enlargement. Interacts with KIAA1191.

It is found in the cell membrane. The protein resides in the golgi apparatus. Its primary physiological function is unclear. Has cytoprotective activity against internal or environmental stresses. May play a role in neuronal development and synaptic plasticity. May be required for neuronal myelin sheath maintenance. May play a role in iron uptake and iron homeostasis. Soluble oligomers are toxic to cultured neuroblastoma cells and induce apoptosis (in vitro). Association with GPC1 (via its heparan sulfate chains) targets PRNP to lipid rafts. Also provides Cu(2+) or Zn(2+) for the ascorbate-mediated GPC1 deaminase degradation of its heparan sulfate side chains. In Ovis canadensis (Bighorn sheep), this protein is Major prion protein (PRNP).